Consider the following 131-residue polypeptide: Large ribosomal subunit protein bL19 (131 aa).

The protein belongs to the bacterial ribosomal protein bL19 family.

In terms of biological role, this protein is located at the 30S-50S ribosomal subunit interface and may play a role in the structure and function of the aminoacyl-tRNA binding site. The protein is Large ribosomal subunit protein bL19 of Anaeromyxobacter sp. (strain K).